Consider the following 83-residue polypeptide: MRLFLSLPVLVVVLSMVLEGPAPVQGAPDVSSALDKLKEFGNTLEDKAWEVINRIKQSEFPAKTRDWFSETFRKVKEKLKINS.

The signal sequence occupies residues Met1–Gly26.

This sequence belongs to the apolipoprotein C1 family.

The protein localises to the secreted. Functionally, inhibitor of lipoprotein binding to the low density lipoprotein (LDL) receptor, LDL receptor-related protein, and very low density lipoprotein (VLDL) receptor. Associates with high density lipoproteins (HDL) and the triacylglycerol-rich lipoproteins in the plasma and makes up about 10% of the protein of the VLDL and 2% of that of HDL. Appears to interfere directly with fatty acid uptake and is also the major plasma inhibitor of cholesteryl ester transfer protein (CETP). Binds free fatty acids and reduces their intracellular esterification. Modulates the interaction of APOE with beta-migrating VLDL and inhibits binding of beta-VLDL to the LDL receptor-related protein. This chain is Apolipoprotein C-I, basic form (APOC1), found in Papio anubis (Olive baboon).